The primary structure comprises 214 residues: UPF0725 protein At1g19565 (214 aa).

Residues E56–E92 are disordered.

Belongs to the UPF0725 (EMB2204) family.

The chain is UPF0725 protein At1g19565 from Arabidopsis thaliana (Mouse-ear cress).